The primary structure comprises 360 residues: Phosphate acyltransferase (360 aa).

Residues 296–305 (STLRREHLDR) are compositionally biased toward basic and acidic residues. The segment at 296 to 360 (STLRREHLDR…LRTAEPPGSL (65 aa)) is disordered. Basic residues predominate over residues 314–333 (PRQRRRPRRQKRRAACRPRP). The segment covering 334–350 (RSAAGRAPGSGVRGAAG) has biased composition (low complexity).

The protein belongs to the PlsX family. Homodimer. Probably interacts with PlsY.

The protein resides in the cytoplasm. It catalyses the reaction a fatty acyl-[ACP] + phosphate = an acyl phosphate + holo-[ACP]. The protein operates within lipid metabolism; phospholipid metabolism. Its function is as follows. Catalyzes the reversible formation of acyl-phosphate (acyl-PO(4)) from acyl-[acyl-carrier-protein] (acyl-ACP). This enzyme utilizes acyl-ACP as fatty acyl donor, but not acyl-CoA. The chain is Phosphate acyltransferase from Deinococcus radiodurans (strain ATCC 13939 / DSM 20539 / JCM 16871 / CCUG 27074 / LMG 4051 / NBRC 15346 / NCIMB 9279 / VKM B-1422 / R1).